Consider the following 293-residue polypeptide: Acetylglutamate kinase (293 aa).

Substrate contacts are provided by residues 60–61 (GG), Arg-82, and Asn-188.

Belongs to the acetylglutamate kinase family. ArgB subfamily.

It is found in the cytoplasm. It catalyses the reaction N-acetyl-L-glutamate + ATP = N-acetyl-L-glutamyl 5-phosphate + ADP. It functions in the pathway amino-acid biosynthesis; L-arginine biosynthesis; N(2)-acetyl-L-ornithine from L-glutamate: step 2/4. Its function is as follows. Catalyzes the ATP-dependent phosphorylation of N-acetyl-L-glutamate. The protein is Acetylglutamate kinase of Methanothermobacter thermautotrophicus (strain ATCC 29096 / DSM 1053 / JCM 10044 / NBRC 100330 / Delta H) (Methanobacterium thermoautotrophicum).